Here is a 373-residue protein sequence, read N- to C-terminus: Putative glutamate--cysteine ligase 2-1 (373 aa).

This sequence belongs to the glutamate--cysteine ligase type 2 family. YbdK subfamily.

The catalysed reaction is L-cysteine + L-glutamate + ATP = gamma-L-glutamyl-L-cysteine + ADP + phosphate + H(+). ATP-dependent carboxylate-amine ligase which exhibits weak glutamate--cysteine ligase activity. In Legionella pneumophila (strain Lens), this protein is Putative glutamate--cysteine ligase 2-1.